Here is a 517-residue protein sequence, read N- to C-terminus: Crotonobetaine/carnitine--CoA ligase (517 aa).

Belongs to the ATP-dependent AMP-binding enzyme family.

The catalysed reaction is 4-(trimethylamino)butanoate + ATP + CoA = 4-(trimethylamino)butanoyl-CoA + AMP + diphosphate. The enzyme catalyses crotonobetaine + ATP + CoA = crotonobetainyl-CoA + AMP + diphosphate. It catalyses the reaction (R)-carnitine + ATP + CoA = (R)-carnitinyl-CoA + AMP + diphosphate. It functions in the pathway amine and polyamine metabolism; carnitine metabolism. Functionally, catalyzes the transfer of CoA to carnitine, generating the initial carnitinyl-CoA needed for the CaiB reaction cycle. Also has activity toward crotonobetaine and gamma-butyrobetaine. This Salmonella agona (strain SL483) protein is Crotonobetaine/carnitine--CoA ligase.